We begin with the raw amino-acid sequence, 91 residues long: UPF0358 protein Sca_0738 (91 aa).

This sequence belongs to the UPF0358 family.

The sequence is that of UPF0358 protein Sca_0738 from Staphylococcus carnosus (strain TM300).